Here is a 226-residue protein sequence, read N- to C-terminus: Uridylate kinase (226 aa).

An ATP-binding site is contributed by 6-10 (KISGK). Residue G43 participates in UMP binding. Residues G44 and R48 each coordinate ATP. UMP-binding positions include D65 and 113 to 119 (FQPGQST). Residues T139, N140, Y145, and D148 each coordinate ATP.

This sequence belongs to the UMP kinase family. Homohexamer.

It localises to the cytoplasm. The enzyme catalyses UMP + ATP = UDP + ADP. The protein operates within pyrimidine metabolism; CTP biosynthesis via de novo pathway; UDP from UMP (UMPK route): step 1/1. Its activity is regulated as follows. Inhibited by UTP. Catalyzes the reversible phosphorylation of UMP to UDP. The polypeptide is Uridylate kinase (Saccharolobus islandicus (strain M.16.27) (Sulfolobus islandicus)).